The sequence spans 277 residues: Ribosomal RNA small subunit methyltransferase A (277 aa).

Positions 15, 17, 42, 64, 89, and 109 each coordinate S-adenosyl-L-methionine.

It belongs to the class I-like SAM-binding methyltransferase superfamily. rRNA adenine N(6)-methyltransferase family. RsmA subfamily.

Its subcellular location is the cytoplasm. The catalysed reaction is adenosine(1518)/adenosine(1519) in 16S rRNA + 4 S-adenosyl-L-methionine = N(6)-dimethyladenosine(1518)/N(6)-dimethyladenosine(1519) in 16S rRNA + 4 S-adenosyl-L-homocysteine + 4 H(+). Specifically dimethylates two adjacent adenosines (A1518 and A1519) in the loop of a conserved hairpin near the 3'-end of 16S rRNA in the 30S particle. May play a critical role in biogenesis of 30S subunits. The sequence is that of Ribosomal RNA small subunit methyltransferase A from Synechococcus sp. (strain CC9311).